A 65-amino-acid chain; its full sequence is Large ribosomal subunit protein bL35 (65 aa).

This sequence belongs to the bacterial ribosomal protein bL35 family.

This chain is Large ribosomal subunit protein bL35, found in Desulforapulum autotrophicum (strain ATCC 43914 / DSM 3382 / VKM B-1955 / HRM2) (Desulfobacterium autotrophicum).